Consider the following 365-residue polypeptide: L-lactate oxidase (365 aa).

The region spanning 6 to 365 (RIPPGVWNAI…ITHDTLTPSC (360 aa)) is the FMN hydroxy acid dehydrogenase domain. Tyr32 is a binding site for pyruvate. FMN is bound by residues 85 to 87 (PVA), Ser114, and Gln135. Pyruvate is bound at residue Tyr137. FMN is bound by residues Thr163, Lys237, and Ser259. 2 residues coordinate pyruvate: His261 and Arg264. His261 functions as the Proton acceptor in the catalytic mechanism. FMN is bound by residues 292–296 (DGGVR) and Arg316.

The protein belongs to the FMN-dependent alpha-hydroxy acid dehydrogenase family. In terms of assembly, homotetramer. FMN is required as a cofactor.

The enzyme catalyses (S)-lactate + O2 = pyruvate + H2O2. It carries out the reaction glycolate + O2 = glyoxylate + H2O2. Functionally, catalyzes the oxidation of (S)-lactate (L-lactate) to pyruvate, with a reduction of O2 to H2O2. To a lesser extent is also able to use glycolate as substrate. This Alicycliphilus denitrificans (strain DSM 14773 / CIP 107495 / K601) protein is L-lactate oxidase.